The sequence spans 403 residues: tRNA pseudouridine synthase 4 (403 aa).

Asp-75 acts as the Nucleophile in catalysis.

The protein belongs to the pseudouridine synthase TruB family.

It localises to the nucleus. The protein resides in the mitochondrion. The enzyme catalyses uridine(55) in tRNA = pseudouridine(55) in tRNA. The catalysed reaction is a uridine in mRNA = a pseudouridine in mRNA. Its function is as follows. Responsible for synthesis of pseudouridine from uracil-55 in the psi GC loop of transfer RNAs. Also catalyzes pseudouridylation of mRNAs with the consensus sequence 5'-GGUUCRA-3'. This chain is tRNA pseudouridine synthase 4 (PUS4), found in Saccharomyces cerevisiae (strain ATCC 204508 / S288c) (Baker's yeast).